The chain runs to 301 residues: GTPase Era (301 aa).

In terms of domain architecture, Era-type G spans 7–175; the sequence is YCGFIAIVGR…AAIVRKHLPE (169 aa). Residues 15–22 are G1; sequence GRPNVGKS. 15-22 lines the GTP pocket; that stretch reads GRPNVGKS. The segment at 41-45 is G2; it reads QTTRH. Positions 62-65 are G3; the sequence is DTPG. GTP is bound by residues 62–66 and 124–127; these read DTPGL and NKVD. The G4 stretch occupies residues 124–127; the sequence is NKVD. Positions 154–156 are G5; it reads ISA. In terms of domain architecture, KH type-2 spans 206-283; sequence LGAELPYSVT…HLELWVKVKS (78 aa).

This sequence belongs to the TRAFAC class TrmE-Era-EngA-EngB-Septin-like GTPase superfamily. Era GTPase family. In terms of assembly, monomer.

Its subcellular location is the cytoplasm. The protein localises to the cell inner membrane. Its function is as follows. An essential GTPase that binds both GDP and GTP, with rapid nucleotide exchange. Plays a role in 16S rRNA processing and 30S ribosomal subunit biogenesis and possibly also in cell cycle regulation and energy metabolism. This is GTPase Era from Cronobacter sakazakii (strain ATCC BAA-894) (Enterobacter sakazakii).